The following is a 204-amino-acid chain: MNFLNFSILIFAYLLGSINSAIIVCYIFRLPSPRSVGSGNPGTTNVLRIGGKVPAAITLIFDILKGLVPVVIAKVLTGNEFITACTALYAILGHIFPIFFGFKGGKGVATLIGTLFGFSWILGLIFVITWLCVAIITRYSSLSALVATVIASFSVIFTSDLQVAAPFLIIAIIILVKHKGNIQRLISGQESKIGDKAKAKNDSN.

Helical transmembrane passes span 8-28, 53-73, 81-101, 116-136, and 155-175; these read ILIFAYLLGSINSAIIVCYIF, VPAAITLIFDILKGLVPVVIA, FITACTALYAILGHIFPIFFG, FGFSWILGLIFVITWLCVAII, and VIFTSDLQVAAPFLIIAIIIL.

This sequence belongs to the PlsY family. In terms of assembly, probably interacts with PlsX.

The protein resides in the cell inner membrane. It carries out the reaction an acyl phosphate + sn-glycerol 3-phosphate = a 1-acyl-sn-glycero-3-phosphate + phosphate. The protein operates within lipid metabolism; phospholipid metabolism. In terms of biological role, catalyzes the transfer of an acyl group from acyl-phosphate (acyl-PO(4)) to glycerol-3-phosphate (G3P) to form lysophosphatidic acid (LPA). This enzyme utilizes acyl-phosphate as fatty acyl donor, but not acyl-CoA or acyl-ACP. In Francisella tularensis subsp. novicida (strain U112), this protein is Glycerol-3-phosphate acyltransferase.